Here is a 319-residue protein sequence, read N- to C-terminus: Serpentine receptor class X-43 (319 aa).

7 helical membrane passes run 28–48, 67–87, 95–115, 138–158, 164–184, 194–214, and 267–287; these read VVSM…IGCF, AQLM…LLNI, YLFG…FLLM, IRTF…YLVV, FVFY…CGTL, TVLS…LMAF, and FFFT…VVVF.

It belongs to the G-protein coupled receptor 1 family. Expressed in ASI sensory neurons.

It localises to the cell membrane. Its subcellular location is the perikaryon. The protein resides in the cell projection. The protein localises to the cilium. Its function is as follows. Receptor for the ascaroside pheromone icas#9 which suppresses exploratory forgaging behavior. In response to ascaroside icas#9, may furthermore play a role in the expression of genes in the TGF-beta signaling pathway, such as daf-7, and in insulin signaling pathway, such as daf-28, which may in turn contribute to exploratory behavior. This Caenorhabditis elegans protein is Serpentine receptor class X-43.